Consider the following 305-residue polypeptide: LysM and putative peptidoglycan-binding domain-containing protein 3 (305 aa).

The Extracellular portion of the chain corresponds to 1-221 (MTGRNQHNGF…PYYGADWGMR (221 aa)). The N-linked (GlcNAc...) asparagine glycan is linked to N29. The segment at 31 to 60 (SETEYSEEDGEAFELRSRGRERHHRSTSRD) is disordered. Positions 68–112 (LIREIKEGDTLISISLQYFCTVADIKRANNLLTEQDFFALRSLRI) constitute a LysM domain. The span at 121 to 144 (TETHNTAPHKSSSPSGTCRITETP) shows a compositional bias: polar residues. The disordered stretch occupies residues 121-156 (TETHNTAPHKSSSPSGTCRITETPVSGASLDSTSSS). Low complexity predominate over residues 146 to 156 (SGASLDSTSSS). A helical transmembrane segment spans residues 222–242 (WWTAVAIMLVVGIVTPVFYLL). Residues 243–305 (YYEVLMKADV…QHHVKHQEET (63 aa)) lie on the Cytoplasmic side of the membrane.

The protein resides in the cell membrane. Its subcellular location is the golgi apparatus. Functionally, essential for Golgi structural integrity. This is LysM and putative peptidoglycan-binding domain-containing protein 3 (lysmd3) from Danio rerio (Zebrafish).